The primary structure comprises 344 residues: Phosphate acyltransferase (344 aa).

It belongs to the PlsX family. In terms of assembly, homodimer. Probably interacts with PlsY.

Its subcellular location is the cytoplasm. The catalysed reaction is a fatty acyl-[ACP] + phosphate = an acyl phosphate + holo-[ACP]. It functions in the pathway lipid metabolism; phospholipid metabolism. Functionally, catalyzes the reversible formation of acyl-phosphate (acyl-PO(4)) from acyl-[acyl-carrier-protein] (acyl-ACP). This enzyme utilizes acyl-ACP as fatty acyl donor, but not acyl-CoA. In Sphingopyxis alaskensis (strain DSM 13593 / LMG 18877 / RB2256) (Sphingomonas alaskensis), this protein is Phosphate acyltransferase.